Consider the following 289-residue polypeptide: F-box protein PP2-A11 (289 aa).

One can recognise an F-box domain in the interval 23 to 69 (QPGLGDLPESCVALILQNLDPVEICRFSKLNTAFHGASWADFVWESK).

In terms of assembly, part of a SCF (ASK-cullin-F-box) protein ligase complex. Interacts with SKP1A/ASK1.

The protein localises to the nucleus. Its pathway is protein modification; protein ubiquitination. Its function is as follows. Component of SCF(ASK-cullin-F-box) E3 ubiquitin ligase complexes, which may mediate the ubiquitination and subsequent proteasomal degradation of target proteins. The polypeptide is F-box protein PP2-A11 (PP2A11) (Arabidopsis thaliana (Mouse-ear cress)).